The sequence spans 138 residues: uncharacterized protein (138 aa).

The HTH merR-type domain maps to 3–72 (LYSISKAAEK…LEDINEFVKD (70 aa)). The H-T-H motif DNA-binding region spans 6 to 25 (ISKAAEKTSISSYTLRYYEK).

This is an uncharacterized protein from Bacillus subtilis (strain 168).